A 245-amino-acid chain; its full sequence is tRNA pseudouridine synthase A (245 aa).

The active-site Nucleophile is D52. Y111 is a binding site for substrate.

It belongs to the tRNA pseudouridine synthase TruA family. Homodimer.

The enzyme catalyses uridine(38/39/40) in tRNA = pseudouridine(38/39/40) in tRNA. Its function is as follows. Formation of pseudouridine at positions 38, 39 and 40 in the anticodon stem and loop of transfer RNAs. In Rickettsia felis (strain ATCC VR-1525 / URRWXCal2) (Rickettsia azadi), this protein is tRNA pseudouridine synthase A.